A 90-amino-acid chain; its full sequence is MEIKVIKEEQNYLELQIDGEEHTIGNLLKGMLLKVPGVKFAAYSLPHPLITSITIKILTDGSISAREALIKAIELAENYANLFIDEVKKI.

This sequence belongs to the archaeal Rpo11/eukaryotic RPB11/RPC19 RNA polymerase subunit family. In terms of assembly, part of the 13-subunit RNA polymerase complex.

The protein localises to the cytoplasm. It catalyses the reaction RNA(n) + a ribonucleoside 5'-triphosphate = RNA(n+1) + diphosphate. DNA-dependent RNA polymerase (RNAP) catalyzes the transcription of DNA into RNA using the four ribonucleoside triphosphates as substrates. In Sulfolobus acidocaldarius (strain ATCC 33909 / DSM 639 / JCM 8929 / NBRC 15157 / NCIMB 11770), this protein is DNA-directed RNA polymerase subunit Rpo11.